A 138-amino-acid polypeptide reads, in one-letter code: Large ribosomal subunit protein eL27 (138 aa).

Belongs to the eukaryotic ribosomal protein eL27 family.

The polypeptide is Large ribosomal subunit protein eL27 (RPL27) (Solanum tuberosum (Potato)).